The following is a 351-amino-acid chain: Purine permease 3 (351 aa).

10 helical membrane passes run 4-24 (ALVI…PLIM), 35-55 (IWFS…PLLF), 72-92 (FFLI…LSGF), 108-128 (TAAL…FFMV), 132-152 (FTPF…VLGM), 168-188 (ITGF…LPLV), 207-227 (FQLI…FIAG), 249-269 (VAVF…GLIF), 274-294 (LVSG…AVIF), and 304-324 (GLSL…EIKS). Positions 45-152 (GFPVIFIPLL…LTVGAAVLGM (108 aa)) constitute an EamA domain. The disordered stretch occupies residues 329–351 (RRIQQEESQETEQSSLSRPISEC).

This sequence belongs to the purine permeases (TC 2.A.7.14) family. In terms of tissue distribution, restricted to pollen.

It is found in the membrane. Its function is as follows. May be involved in transport of purine derivatives during pollen germination and tube elongation. The chain is Purine permease 3 (PUP3) from Arabidopsis thaliana (Mouse-ear cress).